A 326-amino-acid polypeptide reads, in one-letter code: Tumor necrosis factor soluble receptor (326 aa).

Positions 1 to 16 are cleaved as a signal peptide; that stretch reads MFRLTLLLAYVACVYG. 4 TNFR-Cys repeats span residues 27 to 62, 63 to 104, 105 to 147, and 148 to 186; these read KCRG…TVCS, PCKN…DRVC, DCSA…VLCT, and KCPR…TSCT. Cystine bridges form between Cys-28-Cys-39, Cys-40-Cys-53, Cys-43-Cys-61, Cys-64-Cys-79, Cys-82-Cys-96, Cys-86-Cys-104, Cys-106-Cys-120, Cys-123-Cys-146, Cys-129-Cys-149, and Cys-164-Cys-185. Residue Asn-66 is glycosylated (N-linked (GlcNAc...) asparagine; by host). Residues Asn-181, Asn-205, and Asn-238 are each glycosylated (N-linked (GlcNAc...) asparagine; by host).

Functionally, binds to TNF-alpha and beta. Probably prevents TNF to reach cellular target and thereby deampening the potential antiviral effects of the cytokine. In Oryctolagus cuniculus (Rabbit), this protein is Tumor necrosis factor soluble receptor.